Here is a 371-residue protein sequence, read N- to C-terminus: Deoxyuridine 5'-triphosphate nucleotidohydrolase (371 aa).

Residues 260 to 262 and 366 to 367 contribute to the substrate site; these read RSS and FG. The interval 350–371 is disordered; that stretch reads NEFDAEAPPSERGTGGFGSTGI. Residues 362 to 371 show a composition bias toward gly residues; sequence GTGGFGSTGI.

It belongs to the dUTPase family. Mg(2+) serves as cofactor.

The enzyme catalyses dUTP + H2O = dUMP + diphosphate + H(+). In terms of biological role, involved in nucleotide metabolism: produces dUMP, the immediate precursor of thymidine nucleotides and decreases the intracellular concentration of dUTP to avoid uracil incorporation into viral DNA. The chain is Deoxyuridine 5'-triphosphate nucleotidohydrolase from Homo sapiens (Human).